Consider the following 1102-residue polypeptide: Centrosomal protein of 128 kDa (1102 aa).

A phosphoserine mark is found at S31, S248, and S290. 2 coiled-coil regions span residues 215–822 (VSDR…LETE) and 878–959 (EELK…ALQM). Residues 326–346 (QHQVPCISKQPLSHQDDQGDD) are disordered. 2 disordered regions span residues 991-1048 (SEKT…DHSR) and 1070-1102 (DPAS…KYKK). A compositionally biased stretch (basic and acidic residues) spans 1009 to 1027 (QQRRDDTKPRIKSFRDDRP). Composition is skewed to polar residues over residues 1039 to 1048 (HSSSCQDHSR) and 1076 to 1089 (GDTT…TSPQ). The segment covering 1090–1102 (SKKEEHEIKKYKK) has biased composition (basic and acidic residues).

The protein localises to the cytoplasm. It localises to the cytoskeleton. It is found in the microtubule organizing center. Its subcellular location is the centrosome. The protein resides in the centriole. The protein localises to the spindle pole. The chain is Centrosomal protein of 128 kDa (Cep128) from Mus musculus (Mouse).